An 87-amino-acid chain; its full sequence is Small ribosomal subunit protein eS21 (87 aa).

Belongs to the eukaryotic ribosomal protein eS21 family. Component of the small ribosomal subunit (SSU). Mature N.crassa ribosomes consist of a small (40S) and a large (60S) subunit. The 40S small subunit contains 1 molecule of ribosomal RNA (18S rRNA) and at least 32 different proteins. The large 60S subunit contains 3 rRNA molecules (26S, 5.8S and 5S rRNA) and at least 42 different proteins.

It localises to the cytoplasm. Component of the ribosome, a large ribonucleoprotein complex responsible for the synthesis of proteins in the cell. The small ribosomal subunit (SSU) binds messenger RNAs (mRNAs) and translates the encoded message by selecting cognate aminoacyl-transfer RNA (tRNA) molecules. The large subunit (LSU) contains the ribosomal catalytic site termed the peptidyl transferase center (PTC), which catalyzes the formation of peptide bonds, thereby polymerizing the amino acids delivered by tRNAs into a polypeptide chain. The nascent polypeptides leave the ribosome through a tunnel in the LSU and interact with protein factors that function in enzymatic processing, targeting, and the membrane insertion of nascent chains at the exit of the ribosomal tunnel. In Neurospora crassa (strain ATCC 24698 / 74-OR23-1A / CBS 708.71 / DSM 1257 / FGSC 987), this protein is Small ribosomal subunit protein eS21 (crp-7).